The sequence spans 1515 residues: Homeobox protein cut-like 1 (1515 aa).

The stretch at 56–361 forms a coiled coil; it reads LLKSFQGEID…VKKELNTLKS (306 aa). The segment covering 393–405 has biased composition (polar residues); the sequence is ENATLRISNSDLS. 4 disordered regions span residues 393–453, 509–546, 644–666, and 680–702; these read ENAT…SPAG, PYSTNSISSPSPLQQSPDVNGMAPSPSQSESAGSISEG, PKRRNRSEGNITTRIRASETGSD, and LQVQKTAEPVQTSSTSSSGNSDD. Positions 422–432 are enriched in pro residues; the sequence is GPLPASPPPQL. Ser-427 carries the phosphoserine modification. Over residues 436-447 the composition is skewed to polar residues; that stretch reads TGEQVSNTNGTH. Residues 514–544 show a composition bias toward low complexity; that stretch reads SISSPSPLQQSPDVNGMAPSPSQSESAGSIS. Positions 540–627 form a DNA-binding region, CUT 1; that stretch reads AGSISEGEEI…ILALRSIQGR (88 aa). Phosphoserine is present on Ser-761. Disordered stretches follow at residues 769–871 and 884–923; these read PETS…SASA and YSQSSELSLTGASRSETPQNSPLPSSPIVPMAKPAKPSVP. Glycyl lysine isopeptide (Lys-Gly) (interchain with G-Cter in SUMO2) cross-links involve residues Lys-783, Lys-809, and Lys-840. Residues 828-852 are compositionally biased toward basic and acidic residues; the sequence is PERRNLTSSEETKADETTASGKERA. 2 stretches are compositionally biased toward polar residues: residues 853 to 868 and 884 to 906; these read GSSQPRAERSQLQGPS and YSQSSELSLTGASRSETPQNSPL. Ser-904 is subject to Phosphoserine. Residues 929–1016 constitute a DNA-binding region (CUT 2); the sequence is QYEVYMYQEV…QGVLPVQGQQ (88 aa). Polar residues predominate over residues 1032–1044; the sequence is QQGCVSSESTPKT. Positions 1032 to 1105 are disordered; the sequence is QQGCVSSEST…QPTTPLPLSG (74 aa). The span at 1045–1061 shows a compositional bias: low complexity; sequence SASCSPAPESPMSSSES. Ser-1054 and Ser-1064 each carry phosphoserine. A DNA-binding region (CUT 3) is located at residues 1112-1199; that stretch reads QELVAMSPEL…VEKLMDMKRM (88 aa). The disordered stretch occupies residues 1207–1242; the sequence is RRHSSVSDSQPCEPPSVGIDYSQGASPQPQHQLKKP. A DNA-binding region (homeobox) is located at residues 1239-1298; sequence LKKPRVVLAPEEKEALKRAYQQKPYPSPKTIEELATQLNLKTSTVINWFHNYRSRIRREL. A Phosphoserine modification is found at Ser-1265. A Glycyl lysine isopeptide (Lys-Gly) (interchain with G-Cter in SUMO2) cross-link involves residue Lys-1279. Residues 1307–1488 are disordered; sequence SQGQAGASDS…AGARDNPVRK (182 aa). Residues 1313 to 1328 are compositionally biased toward low complexity; it reads ASDSPSARSSRAAPSS. Residues 1331–1343 show a composition bias toward acidic residues; it reads DSCDGVEATDAEE. The residue at position 1332 (Ser-1332) is a Phosphoserine. The span at 1365–1378 shows a compositional bias: basic and acidic residues; sequence ADREEATQPAEKAK. Positions 1406 to 1468 are enriched in low complexity; it reads ADAPAPVPSL…ANAPARRPSS (63 aa). Ser-1468, Ser-1496, and Ser-1506 each carry phosphoserine.

The protein belongs to the CUT homeobox family. Interacts with BANP. Interacts with SATB1 (via DNA-binding domains); the interaction inhibits the attachment of both proteins to DNA. Post-translationally, phosphorylated by PKA. As cells progress into S phase, a fraction of CUX1 molecules is proteolytically processed into N-terminally truncated proteins of 110 kDa by CTSL. Cell cycle-dependent processing of CUX1 serves to generate a CDP/Cux p110 with distinct DNA binding and transcriptional properties. Testis-specific where it is expressed in germ cells.

It localises to the nucleus. Functionally, transcription factor involved in the control of neuronal differentiation in the brain. Regulates dendrite development and branching, and dendritic spine formation in cortical layers II-III. Also involved in the control of synaptogenesis. In addition, it has probably a broad role in mammalian development as a repressor of developmentally regulated gene expression. May act by preventing binding of positively-activing CCAAT factors to promoters. Component of nf-munr repressor; binds to the matrix attachment regions (MARs) (5' and 3') of the immunoglobulin heavy chain enhancer. Represses T-cell receptor (TCR) beta enhancer function by binding to MARbeta, an ATC-rich DNA sequence located upstream of the TCR beta enhancer. Binds to the TH enhancer; may require the basic helix-loop-helix protein TCF4 as a coactivator. Plays a role in cell cycle progression, in particular at the G1/S transition. As cells progress into S phase, a fraction of CUX1 molecules is proteolytically processed into N-terminally truncated proteins of 110 kDa. While CUX1 only transiently binds to DNA and carries the CCAAT-displacement activity, CDP/Cux p110 makes a stable interaction with DNA and stimulates expression of genes such as POLA1. This chain is Homeobox protein cut-like 1, found in Mus musculus (Mouse).